The primary structure comprises 283 residues: Spore coat polysaccharide biosynthesis protein SpsK (283 aa).

It belongs to the dTDP-4-dehydrorhamnose reductase family.

The protein operates within spore coat biogenesis; spore coat polysaccharide biosynthesis. This chain is Spore coat polysaccharide biosynthesis protein SpsK (spsK), found in Bacillus subtilis (strain 168).